Consider the following 426-residue polypeptide: Dihydroorotase (426 aa).

His-58 and His-60 together coordinate Zn(2+). Substrate-binding positions include 60–62 (HLR) and Asn-92. Zn(2+) contacts are provided by Asp-150, His-177, and His-230. Asn-276 lines the substrate pocket. Position 303 (Asp-303) interacts with Zn(2+). Asp-303 is a catalytic residue. His-307 provides a ligand contact to substrate.

The protein belongs to the metallo-dependent hydrolases superfamily. DHOase family. Class I DHOase subfamily. Requires Zn(2+) as cofactor.

The enzyme catalyses (S)-dihydroorotate + H2O = N-carbamoyl-L-aspartate + H(+). The protein operates within pyrimidine metabolism; UMP biosynthesis via de novo pathway; (S)-dihydroorotate from bicarbonate: step 3/3. Catalyzes the reversible cyclization of carbamoyl aspartate to dihydroorotate. This is Dihydroorotase from Acetivibrio thermocellus (strain ATCC 27405 / DSM 1237 / JCM 9322 / NBRC 103400 / NCIMB 10682 / NRRL B-4536 / VPI 7372) (Clostridium thermocellum).